We begin with the raw amino-acid sequence, 458 residues long: Argininosuccinate lyase (458 aa).

Belongs to the lyase 1 family. Argininosuccinate lyase subfamily.

It localises to the cytoplasm. The enzyme catalyses 2-(N(omega)-L-arginino)succinate = fumarate + L-arginine. Its pathway is amino-acid biosynthesis; L-arginine biosynthesis; L-arginine from L-ornithine and carbamoyl phosphate: step 3/3. In Acetivibrio thermocellus (strain ATCC 27405 / DSM 1237 / JCM 9322 / NBRC 103400 / NCIMB 10682 / NRRL B-4536 / VPI 7372) (Clostridium thermocellum), this protein is Argininosuccinate lyase.